A 195-amino-acid polypeptide reads, in one-letter code: ATP-dependent Clp protease proteolytic subunit (195 aa).

The Nucleophile role is filled by serine 98. Histidine 123 is a catalytic residue.

The protein belongs to the peptidase S14 family. Fourteen ClpP subunits assemble into 2 heptameric rings which stack back to back to give a disk-like structure with a central cavity, resembling the structure of eukaryotic proteasomes.

Its subcellular location is the cytoplasm. The catalysed reaction is Hydrolysis of proteins to small peptides in the presence of ATP and magnesium. alpha-casein is the usual test substrate. In the absence of ATP, only oligopeptides shorter than five residues are hydrolyzed (such as succinyl-Leu-Tyr-|-NHMec, and Leu-Tyr-Leu-|-Tyr-Trp, in which cleavage of the -Tyr-|-Leu- and -Tyr-|-Trp bonds also occurs).. Cleaves peptides in various proteins in a process that requires ATP hydrolysis. Has a chymotrypsin-like activity. Plays a major role in the degradation of misfolded proteins. This Staphylococcus haemolyticus (strain JCSC1435) protein is ATP-dependent Clp protease proteolytic subunit.